Reading from the N-terminus, the 342-residue chain is Cyclin-dependent kinase-like 4 (342 aa).

Residues 4-286 (YEKLAKIGEG…CAQLLDSAYF (283 aa)) enclose the Protein kinase domain. ATP is bound by residues 10–18 (IGEGSYGVV) and K33. The [NKR]KIAxRE signature appears at 45 to 51 (RKIALRE). Residue D126 is the Proton acceptor of the active site. Residues 295 to 328 (KRKARSEGRSRRRQQNQLLPLIPGSHISPTPDGR) are disordered.

The protein belongs to the protein kinase superfamily. CMGC Ser/Thr protein kinase family. CDC2/CDKX subfamily.

The protein resides in the cytoplasm. It catalyses the reaction L-seryl-[protein] + ATP = O-phospho-L-seryl-[protein] + ADP + H(+). It carries out the reaction L-threonyl-[protein] + ATP = O-phospho-L-threonyl-[protein] + ADP + H(+). The polypeptide is Cyclin-dependent kinase-like 4 (Cdkl4) (Mus musculus (Mouse)).